The chain runs to 425 residues: MIEQQFLKQCKEKAYFIEHQRVLLAISGGLDSMTLLNLLYKYQKELDIELILAHINHKQRIEADQEEKQLKEIAQKLGVKILTSSFSGVFSEKSARDFRYNFFKKVMQEEDCTALVTAHHADDQAETIFMRILRGSRLRYLSGMKDRQPFGGGELIRPLLEFSKTDFPTVFHFEDASNFENTYFRNRVRNHYFPLLETENPRIKQAIINLGTEIAQLQKALSDLTKDLNQTDLQTFRKQKREVQVFLLQEYLEKFPDLQLSKAQFDEILHILNTKANYHHYLKNQYELIQDYQTFKIQKIGPKSDSKKDAILLQFEDIIELDNFCFSFGKELVGGVVQMIPVSRKTSIVLRHRQSGDRIVLNGHHKKLARYFIDEKYSLQERDEAIIVEQFNEILGIAGIVTSDLSKNSKRDIMKDILYIKKIDR.

An ATP-binding site is contributed by 27–32 (SGGLDS).

Belongs to the tRNA(Ile)-lysidine synthase family.

The protein resides in the cytoplasm. It carries out the reaction cytidine(34) in tRNA(Ile2) + L-lysine + ATP = lysidine(34) in tRNA(Ile2) + AMP + diphosphate + H(+). In terms of biological role, ligates lysine onto the cytidine present at position 34 of the AUA codon-specific tRNA(Ile) that contains the anticodon CAU, in an ATP-dependent manner. Cytidine is converted to lysidine, thus changing the amino acid specificity of the tRNA from methionine to isoleucine. This chain is tRNA(Ile)-lysidine synthase, found in Streptococcus gordonii (strain Challis / ATCC 35105 / BCRC 15272 / CH1 / DL1 / V288).